A 515-amino-acid polypeptide reads, in one-letter code: Glucose-6-phosphate 1-dehydrogenase 6, cytoplasmic (515 aa).

Residues 38 to 45 (GASGDLAK), Arg-73, Tyr-155, and Lys-182 each bind NADP(+). D-glucose 6-phosphate contacts are provided by residues Lys-182, 212–216 (HYLGK), Glu-250, and Asp-269. The active-site Proton acceptor is the His-274. Lys-357 is a binding site for NADP(+). Lys-360 and Arg-365 together coordinate D-glucose 6-phosphate. Lys-366, Arg-370, and Arg-394 together coordinate NADP(+). Gln-396 is a D-glucose 6-phosphate binding site. NADP(+)-binding positions include 402–404 (YMK), 422–424 (DLS), Arg-488, and Trp-510.

The protein belongs to the glucose-6-phosphate dehydrogenase family. As to quaternary structure, forms homodimer. As to expression, expressed in roots, leaves, stems, buds, flowers and siliques.

Its subcellular location is the cytoplasm. It is found in the cytosol. The enzyme catalyses D-glucose 6-phosphate + NADP(+) = 6-phospho-D-glucono-1,5-lactone + NADPH + H(+). It functions in the pathway carbohydrate degradation; pentose phosphate pathway; D-ribulose 5-phosphate from D-glucose 6-phosphate (oxidative stage): step 1/3. Regulated by metabolites. Catalyzes the rate-limiting step of the oxidative pentose-phosphate pathway, which represents a route for the dissimilation of carbohydrates besides glycolysis. The main function of this enzyme is to provide reducing power (NADPH) and pentose phosphates for fatty acid and nucleic acid synthesis which are involved in membrane synthesis and cell division. This chain is Glucose-6-phosphate 1-dehydrogenase 6, cytoplasmic, found in Arabidopsis thaliana (Mouse-ear cress).